The following is a 2609-amino-acid chain: Mycosubtilin synthase subunit C (2609 aa).

Residues 258-1628 (PREKTIHQLF…RVCAQPEMTV (1371 aa)) form a domain 1 (D-serine-activating) region. Residues 288–695 (TYQELNEKAN…HIPSIQESIV (408 aa)) are adenylation 1. Residues 771 to 845 (APRTELEKIL…ELVPYVEPVT (75 aa)) form the Carrier 1 domain. The residue at position 806 (Ser-806) is an O-(pantetheine 4'-phosphoryl)serine. The tract at residues 853 to 1312 (IKGPALLTPI…EISIDELDQF (460 aa)) is epimerization 1. The condensation 1 stretch occupies residues 1322–1623 (IENIYPLTPM…NTIPVRVCAQ (302 aa)). The segment at 1778-2359 (PKEKTIYQLF…AHAIQAAALP (582 aa)) is domain 2 (isoleucine-activating). The segment at 1808–2205 (TYRQLNEQAN…LVESVKEAVV (398 aa)) is adenylation 2. The region spanning 2282–2357 (APRTLIEKQL…TMAHAIQAAA (76 aa)) is the Carrier 2 domain. The residue at position 2317 (Ser-2317) is an O-(pantetheine 4'-phosphoryl)serine. The segment at 2375-2581 (IPVFCFPPLI…ENMSTIRSIM (207 aa)) is thioesterase.

This sequence belongs to the ATP-dependent AMP-binding enzyme family. Pantetheine 4'-phosphate is required as a cofactor.

In terms of biological role, this protein is a multifunctional enzyme, able to activate and polymerize the amino acids Ser and Asn as part of the synthesis of mycosubtilin. The Ser residue is further epimerized to the D-isomer form. The activation sites for these amino acids consist of individual domains. This is Mycosubtilin synthase subunit C (mycC) from Bacillus subtilis.